The following is a 1019-amino-acid chain: Phosphatidylinositol 3,4,5-trisphosphate 5-phosphatase 1 (1019 aa).

The SH2 domain occupies 5-101; it reads WYHGNITRSK…GLVTHLQYPI (97 aa). Acidic residues predominate over residues 103 to 116; it reads KEEEGPEEPDEEQE. 2 disordered regions span residues 103–133 and 909–1019; these read KEEE…TPPS and ETQN…PPTA. The SH3-binding 1 signature appears at 120–125; that stretch reads PNVPPR. Polar residues-rich tracts occupy residues 909 to 931 and 958 to 980; these read ETQN…KQSP and PITS…TNRT. The SH3-binding 2 signature appears at 966–971; the sequence is TLSTQK. The short motif at 1004-1007 is the NPXY motif element; sequence NPLY. Tyr-1007 bears the Phosphotyrosine mark. Over residues 1010-1019 the composition is skewed to polar residues; sequence VNNTLYPPTA.

The protein belongs to the inositol 1,4,5-trisphosphate 5-phosphatase family. Tyrosine phosphorylated by the members of the SRC family after exposure to a diverse array of extracellular stimuli.

It is found in the cytoplasm. The protein resides in the cell membrane. Its subcellular location is the membrane raft. The protein localises to the cytoskeleton. The catalysed reaction is a 1,2-diacyl-sn-glycero-3-phospho-(1D-myo-inositol-3,4,5-trisphosphate) + H2O = a 1,2-diacyl-sn-glycero-3-phospho-(1D-myo-inositol-3,4-bisphosphate) + phosphate. The enzyme catalyses 1D-myo-inositol 1,3,4,5-tetrakisphosphate + H2O = 1D-myo-inositol 1,3,4-trisphosphate + phosphate. It catalyses the reaction a 1,2-diacyl-sn-glycero-3-phospho-(1D-myo-inositol-4,5-bisphosphate) + H2O = a 1,2-diacyl-sn-glycero-3-phospho-(1D-myo-inositol 4-phosphate) + phosphate. Phosphatidylinositol (PtdIns) phosphatase that specifically hydrolyzes the 5-phosphate of phosphatidylinositol-3,4,5-trisphosphate (PtdIns(3,4,5)P3) to produce PtdIns(3,4)P2, thereby negatively regulating the PI3K (phosphoinositide 3-kinase) pathways. Able also to hydrolyzes the 5-phosphate of phosphatidylinositol-4,5-bisphosphate (PtdIns(4,5)P3) and inositol 1,3,4,5-tetrakisphosphate. Acts as a negative regulator of B-cell antigen receptor signaling. Mediates signaling from the FC-gamma-RIIB receptor (FCGR2B), playing a central role in terminating signal transduction from activating immune/hematopoietic cell receptor systems. Acts as a negative regulator of myeloid cell proliferation/survival and chemotaxis, mast cell degranulation, immune cells homeostasis, integrin alpha-IIb/beta-3 signaling in platelets and JNK signaling in B-cells. The chain is Phosphatidylinositol 3,4,5-trisphosphate 5-phosphatase 1 (inpp5d) from Xenopus laevis (African clawed frog).